The primary structure comprises 108 residues: Succinate dehydrogenase assembly factor 4, mitochondrial (108 aa).

A mitochondrion-targeting transit peptide spans Met-1–Ala-20. The tract at residues Arg-31–Phe-108 is disordered. Composition is skewed to basic and acidic residues over residues Lys-52 to Gly-87 and Arg-95 to Phe-108.

This sequence belongs to the SDHAF4 family. Interacts with SDHA in its FAD-bound form.

It localises to the mitochondrion matrix. Its function is as follows. Plays an essential role in the assembly of succinate dehydrogenase (SDH), an enzyme complex (also referred to as respiratory complex II) that is a component of both the tricarboxylic acid (TCA) cycle and the mitochondrial electron transport chain, and which couples the oxidation of succinate to fumarate with the reduction of ubiquinone (coenzyme Q) to ubiquinol. Binds to the flavoprotein subunit SDHA in its FAD-bound form, blocking the generation of excess reactive oxygen species (ROS) and facilitating its assembly with the iron-sulfur protein subunit SDHB into the SDH catalytic dimer. The protein is Succinate dehydrogenase assembly factor 4, mitochondrial of Homo sapiens (Human).